Consider the following 862-residue polypeptide: Putative cargo-transport protein ypp1 (862 aa).

3 TPR repeats span residues 342 to 377, 460 to 493, and 494 to 527; these read QQIF…KSHE, SFMY…QPTN, and TNAL…NPKY. Phosphoserine is present on residues Ser632, Ser633, and Ser637. TPR repeat units lie at residues 665–698, 705–738, 740–772, and 814–847; these read ILGF…RRGK, QKLW…DHEC, WVYY…DPED, and PEAW…ADTN.

It belongs to the YPP1 family.

It localises to the cytoplasm. Involved in endocytosis. The polypeptide is Putative cargo-transport protein ypp1 (ypp1) (Schizosaccharomyces pombe (strain 972 / ATCC 24843) (Fission yeast)).